The primary structure comprises 306 residues: F-box/LRR-repeat protein At3g26922 (306 aa).

The region spanning 13-73 (EDRISDLPEA…QSEDETYSEI (61 aa)) is the F-box domain. 6 LRR repeats span residues 67–93 (DETYSEIVCRLLLSNKAPFLESLHLGF), 98–122 (CRSVEVGMWIGIAYARHVRDLVLHV), 138–170 (CETLESLTLRSWVLVDVPSPACLKSLRTLRLEN), 171–196 (VDYKYDDSVYNLLSGCPNLENLVVYR), 215–243 (LTIYDDNDGEYCTGYVINAPSLKYLKIDG), and 263–288 (IMNVSKIINEKLLETLTSVKRLSLAL).

The polypeptide is F-box/LRR-repeat protein At3g26922 (Arabidopsis thaliana (Mouse-ear cress)).